The following is a 230-amino-acid chain: Protein CWC15 homolog B (230 aa).

The disordered stretch occupies residues 1–126 (MTTAARPTFE…DEDSDDDTAA (126 aa)). Residues 22–34 (DLSQLSKQYSSRD) show a composition bias toward polar residues. The segment covering 52–84 (EEVRSRDFRRELEERERVAVRDKNRDRPTREHT) has biased composition (basic and acidic residues). The span at 102–124 (DADDPLTDEDADEDSDEDSDDDT) shows a compositional bias: acidic residues. Residues 121–165 (DDDTAALLAELEKIKKERAEEQVRKELEQKAEEERIRMENILSGN) adopt a coiled-coil conformation.

Belongs to the CWC15 family. In terms of assembly, identified in the spliceosome C complex. Component of the minor spliceosome, which splices U12-type introns.

The protein resides in the nucleus. Its function is as follows. Involved in pre-mRNA splicing as component of the spliceosome. In Xenopus laevis (African clawed frog), this protein is Protein CWC15 homolog B (cwc15-b).